The primary structure comprises 236 residues: Phosphoribosylaminoimidazole-succinocarboxamide synthase (236 aa).

Belongs to the SAICAR synthetase family.

The enzyme catalyses 5-amino-1-(5-phospho-D-ribosyl)imidazole-4-carboxylate + L-aspartate + ATP = (2S)-2-[5-amino-1-(5-phospho-beta-D-ribosyl)imidazole-4-carboxamido]succinate + ADP + phosphate + 2 H(+). It functions in the pathway purine metabolism; IMP biosynthesis via de novo pathway; 5-amino-1-(5-phospho-D-ribosyl)imidazole-4-carboxamide from 5-amino-1-(5-phospho-D-ribosyl)imidazole-4-carboxylate: step 1/2. The chain is Phosphoribosylaminoimidazole-succinocarboxamide synthase from Chlorobium phaeobacteroides (strain DSM 266 / SMG 266 / 2430).